Here is a 581-residue protein sequence, read N- to C-terminus: Phosphoglucomutase, cytoplasmic (581 aa).

Residues 1–11 (MVFSVAKKDTT) show a composition bias toward basic and acidic residues. The segment at 1–20 (MVFSVAKKDTTPYEGQKPGT) is disordered. 2 residues coordinate alpha-D-glucose 1,6-bisphosphate: arginine 24 and serine 123. Serine 123 acts as the Phosphoserine intermediate in catalysis. Residues serine 123, aspartate 298, aspartate 300, and aspartate 302 each coordinate Mg(2+). The residue at position 123 (serine 123) is a Phosphoserine. Alpha-D-glucose 1,6-bisphosphate contacts are provided by aspartate 302, arginine 303, threonine 366, glutamate 385, serine 387, and lysine 398.

It belongs to the phosphohexose mutase family. In terms of assembly, monomer. The cofactor is Mg(2+).

It localises to the cytoplasm. The enzyme catalyses alpha-D-glucose 1-phosphate = alpha-D-glucose 6-phosphate. It carries out the reaction O-phospho-L-seryl-[protein] + alpha-D-glucose 1-phosphate = alpha-D-glucose 1,6-bisphosphate + L-seryl-[protein]. The catalysed reaction is alpha-D-glucose 1,6-bisphosphate + L-seryl-[protein] = O-phospho-L-seryl-[protein] + alpha-D-glucose 6-phosphate. Functionally, catalyzes the reversible isomerization of alpha-D-glucose 1-phosphate to alpha-D-glucose 6-phosphate. The mechanism proceeds via the intermediate compound alpha-D-glucose 1,6-bisphosphate. This enzyme participates in both the breakdown and synthesis of glucose. The sequence is that of Phosphoglucomutase, cytoplasmic (PGM1) from Bromus inermis (Smooth brome grass).